A 217-amino-acid polypeptide reads, in one-letter code: 3,4-dihydroxy-2-butanone 4-phosphate synthase (217 aa).

D-ribulose 5-phosphate contacts are provided by residues 37 to 38 (RE), aspartate 42, 150 to 154 (RRGHT), and glutamate 174. Glutamate 38 is a Mg(2+) binding site. Residue histidine 153 participates in Mg(2+) binding.

It belongs to the DHBP synthase family. Homodimer. Mg(2+) serves as cofactor. It depends on Mn(2+) as a cofactor.

The enzyme catalyses D-ribulose 5-phosphate = (2S)-2-hydroxy-3-oxobutyl phosphate + formate + H(+). The protein operates within cofactor biosynthesis; riboflavin biosynthesis; 2-hydroxy-3-oxobutyl phosphate from D-ribulose 5-phosphate: step 1/1. Its function is as follows. Catalyzes the conversion of D-ribulose 5-phosphate to formate and 3,4-dihydroxy-2-butanone 4-phosphate. In Desulforapulum autotrophicum (strain ATCC 43914 / DSM 3382 / VKM B-1955 / HRM2) (Desulfobacterium autotrophicum), this protein is 3,4-dihydroxy-2-butanone 4-phosphate synthase.